We begin with the raw amino-acid sequence, 299 residues long: NAD kinase (299 aa).

Residue Asp75 is the Proton acceptor of the active site. Residues 75-76, 149-150, Arg177, Asp179, 190-195, Ala214, and Gln248 each bind NAD(+); these read DG, ND, and TAYALS.

This sequence belongs to the NAD kinase family. Requires a divalent metal cation as cofactor.

The protein resides in the cytoplasm. The enzyme catalyses NAD(+) + ATP = ADP + NADP(+) + H(+). Its function is as follows. Involved in the regulation of the intracellular balance of NAD and NADP, and is a key enzyme in the biosynthesis of NADP. Catalyzes specifically the phosphorylation on 2'-hydroxyl of the adenosine moiety of NAD to yield NADP. The chain is NAD kinase from Burkholderia thailandensis (strain ATCC 700388 / DSM 13276 / CCUG 48851 / CIP 106301 / E264).